Reading from the N-terminus, the 142-residue chain is HTH-type transcriptional regulator MntR (142 aa).

Residues 1 to 63 (MPTPSMEDYI…YEKYRGLVLT (63 aa)) form the HTH dtxR-type domain. 6 residues coordinate Mn(2+): D8, E11, H77, E99, E102, and H103.

The protein belongs to the DtxR/MntR family. Homodimer.

Its subcellular location is the cytoplasm. DNA binding is strongly activated by Mn(2+). Central regulator of manganese homeostasis. The chain is HTH-type transcriptional regulator MntR from Bacillus cereus (strain AH820).